A 172-amino-acid polypeptide reads, in one-letter code: Adenine phosphoribosyltransferase (172 aa).

Belongs to the purine/pyrimidine phosphoribosyltransferase family. As to quaternary structure, homodimer.

The protein resides in the cytoplasm. It carries out the reaction AMP + diphosphate = 5-phospho-alpha-D-ribose 1-diphosphate + adenine. Its pathway is purine metabolism; AMP biosynthesis via salvage pathway; AMP from adenine: step 1/1. Its function is as follows. Catalyzes a salvage reaction resulting in the formation of AMP, that is energically less costly than de novo synthesis. The sequence is that of Adenine phosphoribosyltransferase from Roseiflexus sp. (strain RS-1).